A 286-amino-acid chain; its full sequence is Phycobilisome 32.1 kDa linker polypeptide, phycocyanin-associated, rod (286 aa).

One can recognise a PBS-linker domain in the interval 2-180; sequence AITTAASRLG…LYRGYANSDR (179 aa). The region spanning 234–286 is the CpcD-like domain; that stretch reads DRVYRLEVTGIRSPGYPSVRRSSTVFIVPYERLSDKIQQVHKQGGKIVSVTSA.

Belongs to the phycobilisome linker protein family. Associated with the phycobilisome, a hemidiscoidal structure that is composed of two distinct substructures: a core complex and a number of rods radiating from the core.

The protein resides in the cellular thylakoid membrane. In terms of biological role, rod linker protein, associated with phycocyanin. Linker polypeptides determine the state of aggregation and the location of the disk-shaped phycobiliprotein units within the phycobilisome and modulate their spectroscopic properties in order to mediate a directed and optimal energy transfer. In Nostoc sp. (strain PCC 7120 / SAG 25.82 / UTEX 2576), this protein is Phycobilisome 32.1 kDa linker polypeptide, phycocyanin-associated, rod (cpcC).